Reading from the N-terminus, the 162-residue chain is Interleukin-15 (162 aa).

Positions 1–29 are cleaved as a signal peptide; it reads MRISKPHLRITSIQCYVCLLLNTHFLTEA. Positions 30–48 are excised as a propeptide; the sequence is GIRVFILGCISAGIPKTEA. Cystine bridges form between Cys-83–Cys-133 and Cys-90–Cys-136. Asn-119, Asn-127, and Asn-143 each carry an N-linked (GlcNAc...) asparagine glycan.

This sequence belongs to the IL-15/IL-21 family.

The protein resides in the secreted. In terms of biological role, cytokine that plays a major role in the development of inflammatory and protective immune responses to microbial invaders and parasites by modulating immune cells of both the innate and adaptive immune systems. Stimulates the proliferation of natural killer cells, T-cells and B-cells and promotes the secretion of several cytokines. In monocytes, induces the production of IL8 and monocyte chemotactic protein 1/CCL2, two chemokines that attract neutrophils and monocytes respectively to sites of infection. Unlike most cytokines, which are secreted in soluble form, IL15 is expressed in association with its high affinity IL15RA on the surface of IL15-producing cells and delivers signals to target cells that express IL2RB and IL2RG receptor subunits. Binding to its receptor triggers the phosphorylation of JAK1 and JAK3 and the recruitment and subsequent phosphorylation of signal transducer and activator of transcription-3/STAT3 and STAT5. In mast cells, induces the rapid tyrosine phosphorylation of STAT6 and thereby controls mast cell survival and release of cytokines such as IL4. The sequence is that of Interleukin-15 (IL15) from Marmota monax (Woodchuck).